The primary structure comprises 318 residues: Phosphoenolpyruvate transferase (318 aa).

Residue Asp50 participates in 7,8-didemethyl-8-hydroxy-5-deazariboflavin binding.

This sequence belongs to the CofD family. Homodimer. Requires Mg(2+) as cofactor.

It catalyses the reaction enolpyruvoyl-2-diphospho-5'-guanosine + 7,8-didemethyl-8-hydroxy-5-deazariboflavin = dehydro coenzyme F420-0 + GMP + H(+). It functions in the pathway cofactor biosynthesis; coenzyme F420 biosynthesis. Catalyzes the transfer of the phosphoenolpyruvate moiety from enoylpyruvoyl-2-diphospho-5'-guanosine (EPPG) to 7,8-didemethyl-8-hydroxy-5-deazariboflavin (FO) with the formation of dehydro coenzyme F420-0 and GMP. This Streptomyces griseus subsp. griseus (strain JCM 4626 / CBS 651.72 / NBRC 13350 / KCC S-0626 / ISP 5235) protein is Phosphoenolpyruvate transferase.